Here is a 969-residue protein sequence, read N- to C-terminus: RNA polymerase-associated protein RapA (969 aa).

A Helicase ATP-binding domain is found at 164–334; the sequence is EVGRRHAPRV…FARLRLLDPD (171 aa). 177 to 184 lines the ATP pocket; that stretch reads DEVGLGKT. A DEAH box motif is present at residues 280–283; sequence DEAH. Residues 492-686 enclose the Helicase C-terminal domain; the sequence is RVNWLLEKVK…ELKSQLEQGR (195 aa).

The protein belongs to the SNF2/RAD54 helicase family. RapA subfamily. As to quaternary structure, interacts with the RNAP. Has a higher affinity for the core RNAP than for the holoenzyme. Its ATPase activity is stimulated by binding to RNAP.

Functionally, transcription regulator that activates transcription by stimulating RNA polymerase (RNAP) recycling in case of stress conditions such as supercoiled DNA or high salt concentrations. Probably acts by releasing the RNAP, when it is trapped or immobilized on tightly supercoiled DNA. Does not activate transcription on linear DNA. Probably not involved in DNA repair. The polypeptide is RNA polymerase-associated protein RapA (Vibrio parahaemolyticus serotype O3:K6 (strain RIMD 2210633)).